A 382-amino-acid chain; its full sequence is Chaperone protein DnaJ 2 (382 aa).

One can recognise a J domain in the interval 4–68 (DYYGLLGVSK…DKRRIVDLGG (65 aa)). A CR-type zinc finger spans residues 132–214 (GVTKQVTVDT…CMGDGRIRAR (83 aa)). Cys-145, Cys-148, Cys-162, Cys-165, Cys-188, Cys-191, Cys-202, and Cys-205 together coordinate Zn(2+). 4 CXXCXGXG motif repeats span residues 145–152 (CDRCQGKG), 162–169 (CDTCGGRG), 188–195 (CPTCRGVG), and 202–209 (CQQCMGDG).

Belongs to the DnaJ family. As to quaternary structure, homodimer. Interacts with RNase J. Requires Zn(2+) as cofactor.

Its subcellular location is the cytoplasm. In terms of biological role, participates actively in the response to hyperosmotic and heat shock by preventing the aggregation of stress-denatured proteins and by disaggregating proteins, also in an autonomous, DnaK-independent fashion. Unfolded proteins bind initially to DnaJ; upon interaction with the DnaJ-bound protein, DnaK hydrolyzes its bound ATP, resulting in the formation of a stable complex. GrpE releases ADP from DnaK; ATP binding to DnaK triggers the release of the substrate protein, thus completing the reaction cycle. Several rounds of ATP-dependent interactions between DnaJ, DnaK and GrpE are required for fully efficient folding. Also involved, together with DnaK and GrpE, in the DNA replication of plasmids through activation of initiation proteins. Inhibits the beta-lactamase and RNase activity of RNase J. In Mycobacterium tuberculosis (strain ATCC 25618 / H37Rv), this protein is Chaperone protein DnaJ 2.